A 255-amino-acid chain; its full sequence is Fumarate reductase cytochrome b subunit (255 aa).

Transmembrane regions (helical) follow at residues 33–53 (TGLILALFMIAHMFLVSSILI), 78–98 (IVSVVAAGIILILVAHAFLAL), 126–146 (WFIQALTGFAMFFLASIHLFV), 168–188 (FWLLYIFLLFAVELHGSIGLY), and 208–228 (VKWAMSVFFIVLGLCTYGAYI). Residues His44, His93, His143, and His182 each coordinate heme b.

It belongs to the diheme cytochrome b FrdC family. Part of an enzyme complex containing three subunits: a flavoprotein (frdA), an iron-sulfur protein (frdB), and diheme cytochrome b (frdC). It depends on heme b as a cofactor.

It is found in the cell inner membrane. In terms of biological role, the fumarate reductase enzyme complex is required for fumarate respiration. This subunit anchors the complex in the membrane and binds a diheme cytochrome b. The sequence is that of Fumarate reductase cytochrome b subunit (frdC) from Helicobacter pylori (strain ATCC 700392 / 26695) (Campylobacter pylori).